We begin with the raw amino-acid sequence, 165 residues long: Methylated-DNA--protein-cysteine methyltransferase (165 aa).

Catalysis depends on C126, which acts as the Nucleophile; methyl group acceptor.

Belongs to the MGMT family.

It is found in the cytoplasm. It carries out the reaction a 6-O-methyl-2'-deoxyguanosine in DNA + L-cysteinyl-[protein] = S-methyl-L-cysteinyl-[protein] + a 2'-deoxyguanosine in DNA. It catalyses the reaction a 4-O-methyl-thymidine in DNA + L-cysteinyl-[protein] = a thymidine in DNA + S-methyl-L-cysteinyl-[protein]. Involved in the cellular defense against the biological effects of O6-methylguanine (O6-MeG) and O4-methylthymine (O4-MeT) in DNA. Repairs the methylated nucleobase in DNA by stoichiometrically transferring the methyl group to a cysteine residue in the enzyme. This is a suicide reaction: the enzyme is irreversibly inactivated. The chain is Methylated-DNA--protein-cysteine methyltransferase from Mycolicibacterium paratuberculosis (strain ATCC BAA-968 / K-10) (Mycobacterium paratuberculosis).